The following is a 590-amino-acid chain: Arginine--tRNA ligase (590 aa).

Residues 134–144 (ANPTGPMHVGH) carry the 'HIGH' region motif.

It belongs to the class-I aminoacyl-tRNA synthetase family. As to quaternary structure, monomer.

The protein resides in the cytoplasm. It carries out the reaction tRNA(Arg) + L-arginine + ATP = L-arginyl-tRNA(Arg) + AMP + diphosphate. The sequence is that of Arginine--tRNA ligase from Beijerinckia indica subsp. indica (strain ATCC 9039 / DSM 1715 / NCIMB 8712).